The primary structure comprises 122 residues: Large ribosomal subunit protein uL14 (122 aa).

The protein belongs to the universal ribosomal protein uL14 family. Part of the 50S ribosomal subunit. Forms a cluster with proteins L3 and L19. In the 70S ribosome, L14 and L19 interact and together make contacts with the 16S rRNA in bridges B5 and B8.

In terms of biological role, binds to 23S rRNA. Forms part of two intersubunit bridges in the 70S ribosome. This is Large ribosomal subunit protein uL14 from Neisseria gonorrhoeae (strain ATCC 700825 / FA 1090).